The sequence spans 251 residues: Cobalt transport protein CbiM (251 aa).

Residues 1-27 (MNKKKNTILIGLYFLVGIMLFPDRIYA) form the signal peptide. The next 6 membrane-spanning stretches (helical) occupy residues 35 to 55 (LPVK…ALGI), 66 to 86 (GPGI…LSSL), 103 to 123 (LGAI…VLIF), 131 to 151 (GGLT…PFVA), 166 to 186 (WLSV…TTAT), and 208 to 228 (VFAT…VLIF).

This sequence belongs to the CbiM family. Forms an energy-coupling factor (ECF) transporter complex composed of an ATP-binding protein (A component, CbiO), a transmembrane protein (T component, CbiQ) and 2 possible substrate-capture proteins (S components, CbiM and CbiN) of unknown stoichimetry.

The protein localises to the cell membrane. The protein operates within cofactor biosynthesis; adenosylcobalamin biosynthesis. Functionally, part of the energy-coupling factor (ECF) transporter complex CbiMNOQ involved in cobalt import. The polypeptide is Cobalt transport protein CbiM (Acetohalobium arabaticum (strain ATCC 49924 / DSM 5501 / Z-7288)).